Reading from the N-terminus, the 171-residue chain is Transcription antitermination protein NusB (171 aa).

This sequence belongs to the NusB family.

Its function is as follows. Involved in transcription antitermination. Required for transcription of ribosomal RNA (rRNA) genes. Binds specifically to the boxA antiterminator sequence of the ribosomal RNA (rrn) operons. This is Transcription antitermination protein NusB from Brucella ovis (strain ATCC 25840 / 63/290 / NCTC 10512).